The chain runs to 129 residues: Putative membrane protein insertion efficiency factor (129 aa).

This sequence belongs to the UPF0161 family.

The protein resides in the cell inner membrane. Its function is as follows. Could be involved in insertion of integral membrane proteins into the membrane. This is Putative membrane protein insertion efficiency factor from Rhodopseudomonas palustris (strain TIE-1).